Consider the following 452-residue polypeptide: 5'-nucleotidase domain-containing protein 1 (452 aa).

Asp16 functions as the Nucleophile in the catalytic mechanism. Residues Asp16 and Asp18 each coordinate Mg(2+). Catalysis depends on Asp18, which acts as the Proton donor. Lys171 carries the post-translational modification N6-acetyllysine. Residue Asp313 participates in Mg(2+) binding. Positions 339-361 (GDKDGKPEESEPEEKKGKYEGSK) are enriched in basic and acidic residues. The tract at residues 339-365 (GDKDGKPEESEPEEKKGKYEGSKAKPL) is disordered.

The protein belongs to the 5'(3')-deoxyribonucleotidase family.

This Bos taurus (Bovine) protein is 5'-nucleotidase domain-containing protein 1 (NT5DC1).